We begin with the raw amino-acid sequence, 172 residues long: Type VI secretion system sheath protein TssB1 (172 aa).

Forms a heterodimer with TssC1. Heterodimers assemble to form the sheath of the T6SS machinery. Interacts with TagJ. Interacts with TssA1.

Its function is as follows. Core component of the H1 type VI (H1-T6SS) secretion system that plays a role in the release of toxins targeting both eukaryotic and prokaryotic species. Forms the sheath of the structure by assembling into tubules together with TssC1 resulting in the stacking of cogwheel-like structures showing predominantly a 12-fold symmetry. The sheath contracts to provide the energy needed for effector delivery. This is Type VI secretion system sheath protein TssB1 from Pseudomonas aeruginosa (strain ATCC 15692 / DSM 22644 / CIP 104116 / JCM 14847 / LMG 12228 / 1C / PRS 101 / PAO1).